Here is a 197-residue protein sequence, read N- to C-terminus: Imidazoleglycerol-phosphate dehydratase (197 aa).

This sequence belongs to the imidazoleglycerol-phosphate dehydratase family.

It is found in the cytoplasm. The catalysed reaction is D-erythro-1-(imidazol-4-yl)glycerol 3-phosphate = 3-(imidazol-4-yl)-2-oxopropyl phosphate + H2O. Its pathway is amino-acid biosynthesis; L-histidine biosynthesis; L-histidine from 5-phospho-alpha-D-ribose 1-diphosphate: step 6/9. The protein is Imidazoleglycerol-phosphate dehydratase of Azotobacter vinelandii (strain DJ / ATCC BAA-1303).